The chain runs to 602 residues: Elongation factor 4 (602 aa).

In terms of domain architecture, tr-type G spans 7–189 (RNIRNFSIIA…AIVQRIPAPQ (183 aa)). Residues 19-24 (DHGKST) and 136-139 (NKID) contribute to the GTP site.

It belongs to the TRAFAC class translation factor GTPase superfamily. Classic translation factor GTPase family. LepA subfamily.

The protein resides in the cell inner membrane. It catalyses the reaction GTP + H2O = GDP + phosphate + H(+). Its function is as follows. Required for accurate and efficient protein synthesis under certain stress conditions. May act as a fidelity factor of the translation reaction, by catalyzing a one-codon backward translocation of tRNAs on improperly translocated ribosomes. Back-translocation proceeds from a post-translocation (POST) complex to a pre-translocation (PRE) complex, thus giving elongation factor G a second chance to translocate the tRNAs correctly. Binds to ribosomes in a GTP-dependent manner. This is Elongation factor 4 from Xylella fastidiosa (strain M23).